A 456-amino-acid polypeptide reads, in one-letter code: Phosphoglucomutase/phosphomannomutase (456 aa).

Ser-101 acts as the Phosphoserine intermediate in catalysis. 4 residues coordinate Mg(2+): Ser-101, Asp-243, Asp-245, and Asp-247. Phosphoserine; by autocatalysis is present on Ser-101.

The protein belongs to the phosphohexose mutase family. In terms of assembly, homotetramer. It depends on Mg(2+) as a cofactor. Activated by phosphorylation.

It carries out the reaction alpha-D-glucose 1-phosphate = alpha-D-glucose 6-phosphate. The enzyme catalyses alpha-D-mannose 1-phosphate = D-mannose 6-phosphate. Catalyzes the interconversion of glucose 1-phosphate and glucose 6-phosphate, and the interconversion of mannose 1-phosphate and mannose 6-phosphate. Also displays low activity with deoxyribose 1-phosphate and glucosamine 1-phosphate. The polypeptide is Phosphoglucomutase/phosphomannomutase (Thermococcus kodakarensis (strain ATCC BAA-918 / JCM 12380 / KOD1) (Pyrococcus kodakaraensis (strain KOD1))).